The following is a 637-amino-acid chain: Biosynthetic arginine decarboxylase (637 aa).

The residue at position 101 (K101) is an N6-(pyridoxal phosphate)lysine. 286–296 (FDVGGGLAVDY) contacts substrate.

It belongs to the Orn/Lys/Arg decarboxylase class-II family. SpeA subfamily. Mg(2+) serves as cofactor. Pyridoxal 5'-phosphate is required as a cofactor.

The enzyme catalyses L-arginine + H(+) = agmatine + CO2. It functions in the pathway amine and polyamine biosynthesis; agmatine biosynthesis; agmatine from L-arginine: step 1/1. Catalyzes the biosynthesis of agmatine from arginine. The polypeptide is Biosynthetic arginine decarboxylase (Shewanella sp. (strain ANA-3)).